The chain runs to 493 residues: Voltage-gated potassium channel regulatory subunit KCNF1 (493 aa).

At 1–183 (MDASAEQSLP…KPESSCPARV (183 aa)) the chain is on the cytoplasmic side. The helical transmembrane segment at 184–204 (VAVLSFLLILVSSVVMCMGTI) threads the bilayer. The chain crosses the membrane as a helical span at residues 224–244 (NVETACIGWFTLEYLLRLFSS). Over 245 to 249 (PNKLH) the chain is Cytoplasmic. A helical transmembrane segment spans residues 250 to 270 (FALSFMNIVDVLAILPFYVSL). The chain crosses the membrane as a helical; Voltage-sensor span at residues 290-310 (QALRIMRIARIFKLARHSSGL). The Cytoplasmic segment spans residues 311 to 324 (QTLTYALKRSFKEL). A helical transmembrane segment spans residues 325 to 345 (GLLLMYLAVGIFVFSALGYTM). The pore-forming intramembrane region spans 358–378 (PQSFWWAIITMTTVGYGDIYP). The Selectivity filter signature appears at 370–375 (TVGYGD). A helical transmembrane segment spans residues 386 to 406 (NAAISFLCGVIAIALPIHPII). The Cytoplasmic portion of the chain corresponds to 407–493 (NNFVRYYNKQ…HHRTRLQSCK (87 aa)). The tract at residues 434–468 (SSSAEGKPGGSRSDLDTLPPEPAAREGPSWGSRLK) is disordered.

The protein belongs to the potassium channel family. F (TC 1.A.1.2) subfamily. Kv5.1/KCNF1 sub-subfamily. In terms of assembly, heterotetramer with KCNB1 or KCNB2.

It is found in the cell membrane. Its function is as follows. Regulatory alpha-subunit of the voltage-gated potassium (Kv) channel which, when coassembled with KCNB1 or KCNB2, can modulate their expression and their gating kinetics by acting on deactivation upon repolarization and inactivation during maintained depolarization. Accelerates inactivation but has relatively little effect on deactivation. Coexpression with KCNB1 or KCNB2 markedly slows inactivation. Each modulatory subunit has its own specific properties of regulation, and can lead to extensive inhibitions, to large changes in kinetics, and/or to large shifts in the voltage dependencies of the inactivation process. The gating kinetics depends on the nature and stoichiometry of the associated regulatory sunbunit. Fails to produce a potassium current when expressed alone. In Mus musculus (Mouse), this protein is Voltage-gated potassium channel regulatory subunit KCNF1.